Here is a 176-residue protein sequence, read N- to C-terminus: ATP-dependent protease subunit HslV (176 aa).

Threonine 2 is a catalytic residue. Residues glycine 157, cysteine 160, and threonine 163 each contribute to the Na(+) site.

It belongs to the peptidase T1B family. HslV subfamily. As to quaternary structure, a double ring-shaped homohexamer of HslV is capped on each side by a ring-shaped HslU homohexamer. The assembly of the HslU/HslV complex is dependent on binding of ATP.

The protein localises to the cytoplasm. The catalysed reaction is ATP-dependent cleavage of peptide bonds with broad specificity.. Allosterically activated by HslU binding. Functionally, protease subunit of a proteasome-like degradation complex believed to be a general protein degrading machinery. In Pseudomonas fluorescens (strain ATCC BAA-477 / NRRL B-23932 / Pf-5), this protein is ATP-dependent protease subunit HslV.